Here is a 331-residue protein sequence, read N- to C-terminus: Glucokinase (331 aa).

An ATP-binding site is contributed by Gly14–Thr19.

It belongs to the bacterial glucokinase family.

The protein localises to the cytoplasm. The catalysed reaction is D-glucose + ATP = D-glucose 6-phosphate + ADP + H(+). This chain is Glucokinase, found in Aromatoleum aromaticum (strain DSM 19018 / LMG 30748 / EbN1) (Azoarcus sp. (strain EbN1)).